We begin with the raw amino-acid sequence, 598 residues long: 4-coumarate--CoA ligase-like 6 (598 aa).

ATP is bound by residues Ser-232, Ser-233, Gly-234, Thr-235, Thr-236, and Lys-240. Residue Arg-318 coordinates CoA. Positions 320–389 are SBD1; that stretch reads DLAAAARAVE…TVFPSVQIVQ (70 aa). Residues Gly-367, Gln-389, and Thr-394 each coordinate (E)-4-coumaroyl-AMP. ATP is bound by residues Gln-389, Thr-394, Asp-475, and Arg-490. The interval 390–454 is SBD2; it reads SYGLTESTGP…IRGPVVMKGY (65 aa). (E)-4-coumaroyl-AMP is bound by residues Lys-492 and Lys-496. Positions 498 and 499 each coordinate CoA. ATP is bound at residue Lys-581.

The protein belongs to the ATP-dependent AMP-binding enzyme family. The cofactor is Mg(2+).

The enzyme catalyses (E)-4-coumarate + ATP + CoA = (E)-4-coumaroyl-CoA + AMP + diphosphate. It carries out the reaction (E)-4-coumarate + ATP + H(+) = (E)-4-coumaroyl-AMP + diphosphate. The catalysed reaction is (E)-4-coumaroyl-AMP + CoA = (E)-4-coumaroyl-CoA + AMP + H(+). Its function is as follows. Carboxylate--CoA ligase that may use 4-coumarate as substrate. Follows a two-step reaction mechanism, wherein the carboxylate substrate first undergoes adenylation by ATP, followed by a thioesterification in the presence of CoA to yield the final CoA thioester. The sequence is that of 4-coumarate--CoA ligase-like 6 (4CLL6) from Oryza sativa subsp. japonica (Rice).